Consider the following 1183-residue polypeptide: MKYVKAFVSEISWDCSWYCSAMQERRNEDRQKEEEERILQANNRRFNSLFEYPDNSIKTSKYGFFNFLPMNLFEQFQRLANAYFLILLFLQLVPQISSLAWYTTVIPLIVVLSITGVKDAIDDVKRHRSDQQINNRSVSILVNGRVEEIKWRNVQVGDIIKLENNHPVTADMLLLSSSEPYGLTYIETADLDGETNLKVKQAISVTSAMEDNLELLSSFNGEVRCDPPNNKLDKFSGTLSYLGNTYLLNHERLLLRGCVIRNTDWCYGLVVYTGQDTKLMQNSGRSTFKRTHIDHLMNVLVVWIFMFLGGMCFLLSIGHGIWENSRGYYFQAFLPWKHYITSSATSSALIFWSYFIVLNTMVPISLYVSVEIIRLGNSYYINWDRKMFYAPKNMPAQARTTTLNEELGQVQYVFSDKTGTLTENVMIFNKCSINGKTYGYSYDDNGEYVPKSPKDKVDFSYNHLADPKFSFYDKTLVEAVKSEDPLVYLFFLCLSLCHTVMSEEKVEGELVYQAQSPDEGALVTATRNFGFVFCSRTPETITVIEMGKIRVYRLLAILDFSNERKRMSVIVRTPEDRVMLFCKGADTIIYELLHPSCASLSEVTMDHLDDFASEGLRTLMVAYRELDKAYFQTWIKKHGEAWLTLENRERKLALVYEEIERDLMLLGATAIEDKLQRGVPETIVTLSKAKIKIWVLTGDKQETAVNIAYSCRIFKDEMDGVFMVEGTDRETVLEELRTARKKMKPESLLESDPINMYLARKPKMPFKSLDEVANGNYGLVISGYSLAYALEGSLEFELLRTACMCKGVVCCRMTPLQKAQVVDLVKRYKKVVTLAIGDGANDISMIKAAHIGVGISNQEGMQATLSSDFSFCQFHFLQRLLLVHGRLSYNRMCKFLSYFFYKNFAFTLVHFWYAFFNGFSAQTVYDIWFITFYNLIYTSLPVLGLSLFEKDVNETWSLCYPELYEPGQHNLYFNKKEFVKCLLHGIYNSFVLFFVPMGTVFNSERNDGKDISDFQSFSLLVQTTLIGVMTMQIALRTTSWTMINHTFTWGSLGLYFCILILLCSDGLCLRYPSIFNFLGVARNSLSQPQIWLCLILSTILCMIPLIGYNFLRPLLWPINADKVLNRIHFCLKHPIPTQVQTKIKHPSLRRSAYAFSHKQGFGALITSGKTLKSSALAKSKRFL.

Transmembrane regions (helical) follow at residues 96–116 (ISSL…SITG), 299–319 (VLVV…SIGH), and 348–368 (ALIF…SLYV). Asp-416 acts as the 4-aspartylphosphate intermediate in catalysis. Asp-416, Lys-417, Thr-418, Glu-519, Phe-560, Lys-583, Arg-617, Thr-697, Gly-698, Asp-699, Arg-812, and Lys-818 together coordinate ATP. Asp-416 contacts Mg(2+). Thr-418 lines the Mg(2+) pocket. Residue Asp-838 participates in Mg(2+) binding. ATP-binding residues include Asn-841 and Asp-842. A Mg(2+)-binding site is contributed by Asp-842. 6 helical membrane-spanning segments follow: residues 904–924 (FAFT…AQTV), 927–947 (IWFI…GLSL), 981–1001 (CLLH…GTVF), 1014–1034 (FQSF…MQIA), 1049–1069 (WGSL…GLCL), and 1090–1110 (IWLC…GYNF).

This sequence belongs to the cation transport ATPase (P-type) (TC 3.A.3) family. Type IV subfamily. It depends on Mg(2+) as a cofactor. As to expression, highly expressed in testis.

It is found in the cytoplasmic vesicle. It localises to the secretory vesicle. Its subcellular location is the acrosome membrane. It carries out the reaction ATP + H2O + phospholipidSide 1 = ADP + phosphate + phospholipidSide 2.. In terms of biological role, P4-ATPase flippase which catalyzes the hydrolysis of ATP coupled to the transport of aminophospholipids from the outer to the inner leaflet of various membranes and ensures the maintenance of asymmetric distribution of phospholipids. Phospholipid translocation also seems to be implicated in vesicle formation and in uptake of lipid signaling molecules. May play a role in phospholid transport across membranes and in acrosome formation. This Mus musculus (Mouse) protein is Phospholipid-transporting ATPase FetA (Atp8b5).